A 633-amino-acid chain; its full sequence is FAD-binding monooxygenase andJ (633 aa).

Residues 117 to 120, 129 to 130, and Tyr135 each bind FAD; these read TWYW and DT. Residue 127-129 participates in NADP(+) binding; it reads MCD. Residues 269–275 and 292–293 each bind NADP(+); these read TGASAVQ and RT.

It belongs to the FAD-binding monooxygenase family. It depends on FAD as a cofactor.

Its pathway is secondary metabolite biosynthesis; terpenoid biosynthesis. In terms of biological role, FAD-binding monooxygenase; part of the gene cluster that mediates the biosynthesis of anditomin, a fungal meroterpenoid. The first step of the pathway is the synthesis of 3,5-dimethylorsellinic acid (DMOA) by the polyketide synthase andM. DMOA is then converted to the phthalide compound 5,7-dihydroxy-4,6-dimethylphthalide (DHDMP) by the cytochrome P450 monooxygenase andK, which is further prenylated by the prenyltransferase andD to yield farnesyl-DHDMP. Further epoxidation by the FAD-dependent monooxygenase andE leads to epoxyfarnesyl-DHDMP. The next step involves the terpene cyclase andB that converts epoxyfarnesyl-DHDMP into preandiloid A through opening of the epoxide ring followed by the cyclization of the farnesyl moiety. Preandiloid A is in turn oxidized at the C-3 hydroxyl group to yield preandiloid B by the dehydrogenase andC. The dioxygenase andA is solely responsible for the dehydrogenation of preandiloid B leading to the enone preandiloid C, as well as for the intriguing structural rearrangement to generate the bicyclo[2.2.2]octane core, transforming preandiloid C into andiconin. FAD-binding monooxygenase andJ then produces andilesin D which is reduced by dehydrogenase andI to yield andilesin A. Action of acetyltransferase andG followed by a spontaneous acetate elimination leads then to andilesin B, which is in turn substrate of the short chain dehydrogenase andH to yield andilesin C. Finally, the dioxygenase andF catalyzes the transformation of andilesin C to anditomin. The chain is FAD-binding monooxygenase andJ from Emericella variicolor (Aspergillus stellatus).